A 477-amino-acid chain; its full sequence is Cytochrome P450 monooxygenase poxC (477 aa).

Residues 24 to 41 form a helical membrane-spanning segment; sequence AWHFAVLSFVYVIARSIY. Cysteine 420 serves as a coordination point for heme.

Belongs to the cytochrome P450 family. Requires heme as cofactor.

The protein localises to the membrane. The protein operates within secondary metabolite biosynthesis. Its function is as follows. Cytochrome P450 monooxygenase; part of the gene cluster that mediates the biosynthesis of oxaleimides, cytotoxic compounds containing an unusual disubstituted succinimide moiety. The first step of the pathway is provided by the HR-PKS poxF that serves in a new mode of collaborative biosynthesis with the PKS-NRPS poxE, by providing the olefin containing amino acid substrate via the synthesis of an ACP-bound dec-4-enoate. The cytochrome P450 monooxygenase poxM-catalyzed oxidation at the alpha-position creates the enzyme-bound 2-hydroxydec-4-enoyl-ACP thioester, which may be prone to spontaneous hydrolysis to yield 2-hydroxydec-4-enoic acid due to increased electrophilicity of the carbonyl. 2-hydroxydec-4-enoic acid can then be further oxidized by poxM to yield the alpha-ketoacid 2-oxodec-4-enoicacid, which is reductively aminated by the aminotransferase poxL to yield (S,E)-2-aminodec-4-enoic acid. The Hybrid PKS-NRPS synthetase poxE then performs condensation between the octaketide product of its PKS modules and the amino group of (S,E)-2-aminodec-4-enoic acid which is activated and incorporated by the adenylation domain. The resulting aminoacyl product can be cyclized by the Diels-Alderase PoxQ and reductively released by the reductive (R) domain of poxE to yield an aldehyde intermediate. The released aldehyde is then substrate for a Knoevenagel condensation by the hydrolyase poxO followed by an oxidation at the 5-position of the pyrrolidone ring. The presence of the olefin from the amino acid building block allows for migration of the substituted allyl group to occur. This allylic transposition reaction takes place in a conjugate addition, semipinacol-like fashion to yield a succinimide intermediate. Iterative two-electron oxidations of the C7 methyl of the succinimide intermediate to the carboxylic acid can be catalyzed by one of two remaining cytochrome P450 monooxygenasess poxC or poxD to yield oxaleimide A. Subsequent oxidation yields the maleimide scaffold oxaleimide I. Both oxaleimide A and oxaleimide I can undergo oxidative modifications in the decalin ring to yield the series of products oxaleimides B to H. The chain is Cytochrome P450 monooxygenase poxC from Penicillium oxalicum (strain 114-2 / CGMCC 5302) (Penicillium decumbens).